We begin with the raw amino-acid sequence, 225 residues long: Sugar fermentation stimulation protein homolog (225 aa).

It belongs to the SfsA family.

This is Sugar fermentation stimulation protein homolog from Sulfurisphaera tokodaii (strain DSM 16993 / JCM 10545 / NBRC 100140 / 7) (Sulfolobus tokodaii).